A 143-amino-acid polypeptide reads, in one-letter code: uncharacterized protein (143 aa).

The disordered stretch occupies residues 1–37; sequence MSAPASSSAIAPSQPTAPGHARHSASWSASASDPSGA.

Belongs to the dynein light chain Tctex-type family.

This is an uncharacterized protein from Mycosarcoma maydis (Corn smut fungus).